Consider the following 883-residue polypeptide: N,N'-diacetylchitobiase (883 aa).

Positions 1–17 are cleaved as a signal peptide; the sequence is MLKHSLIAASVITTLAG. A lipid anchor (N-palmitoyl cysteine) is attached at C18. C18 carries the S-diacylglycerol cysteine lipid modification. 3 disulfide bridges follow: C54–C64, C394–C402, and C502–C577. E537 serves as the catalytic Proton donor.

This sequence belongs to the glycosyl hydrolase 20 family. This protein is probably a lipoprotein, its processing is inhibited by globomycin.

The protein localises to the cell outer membrane. It carries out the reaction Hydrolysis of terminal non-reducing N-acetyl-D-hexosamine residues in N-acetyl-beta-D-hexosaminides.. The protein operates within glycan degradation; chitin degradation. Functionally, hydrolysis of terminal, non-reducing N-acetyl-beta-D-glucosamine residues in chitobiose and higher analogs, and in glycoproteins. This is N,N'-diacetylchitobiase (chb) from Vibrio harveyi (Beneckea harveyi).